The following is a 243-amino-acid chain: Coproheme decarboxylase (243 aa).

Residue Tyr-145 is part of the active site. Position 168 (His-168) interacts with Fe-coproporphyrin III.

It belongs to the ChdC family. Type 2 subfamily. It depends on Fe-coproporphyrin III as a cofactor.

The catalysed reaction is Fe-coproporphyrin III + 2 H2O2 + 2 H(+) = heme b + 2 CO2 + 4 H2O. It catalyses the reaction Fe-coproporphyrin III + H2O2 + H(+) = harderoheme III + CO2 + 2 H2O. It carries out the reaction harderoheme III + H2O2 + H(+) = heme b + CO2 + 2 H2O. Its pathway is porphyrin-containing compound metabolism; protoheme biosynthesis. Functionally, involved in coproporphyrin-dependent heme b biosynthesis. Catalyzes the decarboxylation of Fe-coproporphyrin III (coproheme) to heme b (protoheme IX), the last step of the pathway. The reaction occurs in a stepwise manner with a three-propionate intermediate. This Streptomyces coelicolor (strain ATCC BAA-471 / A3(2) / M145) protein is Coproheme decarboxylase.